A 675-amino-acid chain; its full sequence is Putative acyl-coenzyme A oxidase 3.2, peroxisomal (675 aa).

A peroxisome-targeting transit peptide spans 1–34 (MSENVELRRAHILANHILRSPRPSSNPSLTPEVC). An FAD-binding site is contributed by 442-457 (AVGGQGLKTENRVGHL).

This sequence belongs to the acyl-CoA oxidase family. The cofactor is FAD.

It localises to the peroxisome. The enzyme catalyses a 2,3-saturated acyl-CoA + O2 = a (2E)-enoyl-CoA + H2O2. Its function is as follows. Catalyzes the desaturation of acyl-CoAs to 2-trans-enoyl-CoAs. This chain is Putative acyl-coenzyme A oxidase 3.2, peroxisomal (ACX3.2), found in Arabidopsis thaliana (Mouse-ear cress).